The primary structure comprises 171 residues: uncharacterized protein (171 aa).

This sequence to M.jannaschii MJ0417.

This is an uncharacterized protein from Methanocaldococcus jannaschii (strain ATCC 43067 / DSM 2661 / JAL-1 / JCM 10045 / NBRC 100440) (Methanococcus jannaschii).